A 372-amino-acid chain; its full sequence is Glutamate 5-kinase (372 aa).

An ATP-binding site is contributed by lysine 14. Residues serine 54, aspartate 141, and asparagine 153 each contribute to the substrate site. Residue 173–174 (TD) coordinates ATP. The region spanning 280–358 (RGTLTLDEGA…DEIEKLLGYV (79 aa)) is the PUA domain.

The protein belongs to the glutamate 5-kinase family.

Its subcellular location is the cytoplasm. The catalysed reaction is L-glutamate + ATP = L-glutamyl 5-phosphate + ADP. It functions in the pathway amino-acid biosynthesis; L-proline biosynthesis; L-glutamate 5-semialdehyde from L-glutamate: step 1/2. Catalyzes the transfer of a phosphate group to glutamate to form L-glutamate 5-phosphate. The chain is Glutamate 5-kinase from Stutzerimonas stutzeri (strain A1501) (Pseudomonas stutzeri).